The following is a 333-amino-acid chain: N-acetyl-gamma-glutamyl-phosphate reductase (333 aa).

Cysteine 136 is an active-site residue.

Belongs to the NAGSA dehydrogenase family. Type 1 subfamily.

The protein localises to the cytoplasm. It catalyses the reaction N-acetyl-L-glutamate 5-semialdehyde + phosphate + NADP(+) = N-acetyl-L-glutamyl 5-phosphate + NADPH + H(+). The protein operates within amino-acid biosynthesis; L-arginine biosynthesis; N(2)-acetyl-L-ornithine from L-glutamate: step 3/4. Catalyzes the NADPH-dependent reduction of N-acetyl-5-glutamyl phosphate to yield N-acetyl-L-glutamate 5-semialdehyde. This is N-acetyl-gamma-glutamyl-phosphate reductase from Xylella fastidiosa (strain 9a5c).